Here is a 237-residue protein sequence, read N- to C-terminus: Carbonyl reductase family member 4 (237 aa).

NADP(+) contacts are provided by residues 11-14, 34-35, D57, and 84-86; these read SRGI, RN, and AAG. Residue S135 coordinates substrate. NADP(+)-binding positions include Y148, K152, and 181-183; that span reads IHT. Residue Y148 is the Proton acceptor of the active site.

It belongs to the short-chain dehydrogenases/reductases (SDR) family. Homotetramer (in vitro). Heterotetramer with HSD17B8; contains two molecules each of HSD17B8 and CBR4.

It localises to the mitochondrion matrix. It participates in lipid metabolism; fatty acid biosynthesis. Its function is as follows. The heterotetramer with HSD17B8 has NADH-dependent 3-ketoacyl-acyl carrier protein reductase activity, and thereby plays a role in mitochondrial fatty acid biosynthesis. Within the heterotetramer, HSD17B8 binds NADH; CBR4 binds NADPD. The homotetramer has NADPH-dependent quinone reductase activity. Both homotetramer and the heterotetramer have broad in vitro substrate specificity and can reduce 9,10-phenanthrenequinone, 1,4-benzoquinone and various other o-quinones and p-quinones. This chain is Carbonyl reductase family member 4 (cbr4), found in Danio rerio (Zebrafish).